We begin with the raw amino-acid sequence, 334 residues long: Methionine import ATP-binding protein MetN (334 aa).

Residues 7 to 246 (VEFRSVSKVF…PRSAPARAFV (240 aa)) form the ABC transporter domain. An ATP-binding site is contributed by 43 to 50 (GYSGAGKS).

Belongs to the ABC transporter superfamily. Methionine importer (TC 3.A.1.24) family. In terms of assembly, the complex is composed of two ATP-binding proteins (MetN), two transmembrane proteins (MetI) and a solute-binding protein (MetQ).

Its subcellular location is the cell membrane. The catalysed reaction is L-methionine(out) + ATP + H2O = L-methionine(in) + ADP + phosphate + H(+). It carries out the reaction D-methionine(out) + ATP + H2O = D-methionine(in) + ADP + phosphate + H(+). In terms of biological role, part of the ABC transporter complex MetNIQ involved in methionine import. Responsible for energy coupling to the transport system. In Nocardia farcinica (strain IFM 10152), this protein is Methionine import ATP-binding protein MetN.